A 359-amino-acid chain; its full sequence is Peptide chain release factor 1 (359 aa).

Q234 is modified (N5-methylglutamine). A disordered region spans residues 283–305; it reads SQKDAARAADRRAQVGSGDRSER.

This sequence belongs to the prokaryotic/mitochondrial release factor family. Post-translationally, methylated by PrmC. Methylation increases the termination efficiency of RF1.

The protein resides in the cytoplasm. Peptide chain release factor 1 directs the termination of translation in response to the peptide chain termination codons UAG and UAA. The chain is Peptide chain release factor 1 from Methylobacterium sp. (strain 4-46).